We begin with the raw amino-acid sequence, 91 residues long: Long neurotoxin OH-56 (91 aa).

The N-terminal stretch at 1 to 21 (MKTLLLTLVVVTIMCLDLGYT) is a signal peptide. 5 disulfide bridges follow: C24–C42, C35–C63, C48–C52, C67–C78, and C79–C84.

It belongs to the three-finger toxin family. Long-chain subfamily. Type II alpha-neurotoxin sub-subfamily. In terms of tissue distribution, expressed by the venom gland.

The protein localises to the secreted. Its function is as follows. Binds with high affinity to muscular (alpha-1/CHRNA1) and neuronal (alpha-7/CHRNA7) nicotinic acetylcholine receptor (nAChR) and inhibits acetylcholine from binding to the receptor, thereby impairing neuromuscular and neuronal transmission. This chain is Long neurotoxin OH-56, found in Ophiophagus hannah (King cobra).